We begin with the raw amino-acid sequence, 391 residues long: GTPase HflX (391 aa).

Residues 162 to 181 (LAQQRGGAKGTRGASRGAGE) form a disordered region. The Hflx-type G domain occupies 222–391 (KIGAIVGYTN…KITDIIIFDK (170 aa)). Residues 228 to 235 (GYTNAGKS), 253 to 257 (FATLD), 278 to 281 (DTVG), 344 to 347 (NKMD), and 369 to 371 (SVT) contribute to the GTP site. Ser235 and Thr255 together coordinate Mg(2+).

It belongs to the TRAFAC class OBG-HflX-like GTPase superfamily. HflX GTPase family. Monomer. Associates with the 50S ribosomal subunit. The cofactor is Mg(2+).

Its subcellular location is the cytoplasm. Its function is as follows. GTPase that associates with the 50S ribosomal subunit and may have a role during protein synthesis or ribosome biogenesis. The sequence is that of GTPase HflX from Treponema denticola (strain ATCC 35405 / DSM 14222 / CIP 103919 / JCM 8153 / KCTC 15104).